Consider the following 414-residue polypeptide: Eukaryotic initiation factor 4A-1 (414 aa).

The short motif at 41 to 69 is the Q motif element; the sequence is ESFDDMGLQENLLRGIYAYGFEKPSAIQQ. Positions 72–242 constitute a Helicase ATP-binding domain; sequence IVPFCKGLDV…RKFMNKPVRI (171 aa). ATP is bound at residue 85-92; that stretch reads AQSGTGKT. A DEAD box motif is present at residues 190-193; the sequence is DEAD. The 162-residue stretch at 253-414 folds into the Helicase C-terminal domain; it reads GIKQFYVNVE…ELPANVADLL (162 aa).

This sequence belongs to the DEAD box helicase family. eIF4A subfamily. EIF4F is a multi-subunit complex, the composition of which varies with external and internal environmental conditions. It is composed of at least EIF4A, EIF4E and EIF4G.

The enzyme catalyses ATP + H2O = ADP + phosphate + H(+). In terms of biological role, ATP-dependent RNA helicase which is a subunit of the eIF4F complex involved in cap recognition and is required for mRNA binding to ribosome. In the current model of translation initiation, eIF4A unwinds RNA secondary structures in the 5'-UTR of mRNAs which is necessary to allow efficient binding of the small ribosomal subunit, and subsequent scanning for the initiator codon. The protein is Eukaryotic initiation factor 4A-1 of Oryza sativa subsp. japonica (Rice).